The chain runs to 141 residues: Elongation factor G, chloroplastic (141 aa).

The tr-type G domain occupies 12-141; the sequence is KDYRNIGIMA…VPRICFVNKM (130 aa). Residues 21 to 28 and 85 to 89 each bind GTP; these read AHIDAGKT and DTPGH.

It belongs to the TRAFAC class translation factor GTPase superfamily. Classic translation factor GTPase family. EF-G/EF-2 subfamily.

The protein resides in the plastid. Its subcellular location is the chloroplast. The protein operates within protein biosynthesis; polypeptide chain elongation. Functionally, chloroplast-localized elongation factor EF-G involved in protein synthesis in plastids. Catalyzes the GTP-dependent ribosomal translocation step during translation elongation. During this step, the ribosome changes from the pre-translocational (PRE) to the post-translocational (POST) state as the newly formed A-site-bound peptidyl-tRNA and P-site-bound deacylated tRNA move to the P and E sites, respectively. Catalyzes the coordinated movement of the two tRNA molecules, the mRNA and conformational changes in the ribosome. The polypeptide is Elongation factor G, chloroplastic (fusA) (Pisum sativum (Garden pea)).